The chain runs to 198 residues: Holliday junction branch migration complex subunit RuvA (198 aa).

The interval 1-63 (MYDYIKGQLT…EDAHLLFGFH (63 aa)) is domain I. Positions 64–142 (TEDEKDVFLK…EAPQETGHTK (79 aa)) are domain II. A flexible linker region spans residues 143–147 (ARSNK). The segment at 148-198 (AGNTQLDEAIEALLALGYTATELKKIRAFFEGTSETAEQYIKSALKLLMKG) is domain III.

This sequence belongs to the RuvA family. In terms of assembly, homotetramer. Forms an RuvA(8)-RuvB(12)-Holliday junction (HJ) complex. HJ DNA is sandwiched between 2 RuvA tetramers; dsDNA enters through RuvA and exits via RuvB. An RuvB hexamer assembles on each DNA strand where it exits the tetramer. Each RuvB hexamer is contacted by two RuvA subunits (via domain III) on 2 adjacent RuvB subunits; this complex drives branch migration. In the full resolvosome a probable DNA-RuvA(4)-RuvB(12)-RuvC(2) complex forms which resolves the HJ.

The protein localises to the cytoplasm. Its function is as follows. The RuvA-RuvB-RuvC complex processes Holliday junction (HJ) DNA during genetic recombination and DNA repair, while the RuvA-RuvB complex plays an important role in the rescue of blocked DNA replication forks via replication fork reversal (RFR). RuvA specifically binds to HJ cruciform DNA, conferring on it an open structure. The RuvB hexamer acts as an ATP-dependent pump, pulling dsDNA into and through the RuvAB complex. HJ branch migration allows RuvC to scan DNA until it finds its consensus sequence, where it cleaves and resolves the cruciform DNA. In Streptococcus pyogenes serotype M49 (strain NZ131), this protein is Holliday junction branch migration complex subunit RuvA.